The following is a 181-amino-acid chain: Dehydration-responsive element-binding protein 1E (181 aa).

Residues 14–26 (KKRAGRRIFKETR) carry the Nuclear localization signal motif. Positions 29-86 (IYRGVRRRDGDKWVCEVREPIHQRRVWLGTYPTADMAARAHDVAVLALRGRSACLNFS) form a DNA-binding region, AP2/ERF.

It belongs to the AP2/ERF transcription factor family. ERF subfamily.

The protein resides in the nucleus. Functionally, transcriptional activator that binds specifically to the DNA sequence 5'-[AG]CCGAC-3'. Binding to the C-repeat/DRE element mediates cold or dehydration-inducible transcription. CBF/DREB1 factors play a key role in freezing tolerance and cold acclimation. This Arabidopsis thaliana (Mouse-ear cress) protein is Dehydration-responsive element-binding protein 1E (DREB1E).